The primary structure comprises 398 residues: Tryptophan synthase beta chain (398 aa).

Residue Lys-90 is modified to N6-(pyridoxal phosphate)lysine.

Belongs to the TrpB family. As to quaternary structure, tetramer of two alpha and two beta chains. Requires pyridoxal 5'-phosphate as cofactor.

The catalysed reaction is (1S,2R)-1-C-(indol-3-yl)glycerol 3-phosphate + L-serine = D-glyceraldehyde 3-phosphate + L-tryptophan + H2O. Its pathway is amino-acid biosynthesis; L-tryptophan biosynthesis; L-tryptophan from chorismate: step 5/5. Functionally, the beta subunit is responsible for the synthesis of L-tryptophan from indole and L-serine. In Anoxybacillus flavithermus (strain DSM 21510 / WK1), this protein is Tryptophan synthase beta chain.